Reading from the N-terminus, the 682-residue chain is MDSFNYIHGKYKKNGTGGDRSINPSSHSSSGKNIILCFDGTRENFGPQPFTNILKLYNLLENGDSSEQICYYQPGIGSVGFDAVVDVRRRLTISHLQNLLDSMFAFSLDNHICSAYLFLMKYFEPGDRIYMFGFSRGAFIARVLAGMIERVGLLSKGLEEMVKMAWQIYEKWEYDSQPNELQYTSTLAEEFKKTFSRDYEVKIHFQGLFDSVNSVGILRDRLFPCTQRSNIVEHVRHCVSLDERRGKFKQLCFTPMPYIPKLFSLTYCNHITDQCSPVPTSNALMRDLTPENPLIKYTLKSGAHSISNPSPLIPDNPGRLLSSKSEETTELLLDLNSFLEGNSYARDTECSTRGIEAIFQLQSIQGSGTSSRMTMTPDLIEKWFPGDHSDVGGGWAPDCETEENLSNLTLRWILAEAIKFGVKFKPGAIHDFATKHTSIGSLFADTHDYLSFNSPKKCSLLGVSDNEDGAREDKSGRNERMEDCLKNIKETRLSLKDEKEKVKDAFTLKCGHANKFMRLVWWVLELLPIGIRMENKEGKWQNFHTPNLGRSRYVPEYVSLHWSVYWRIKFDRRYRPDNMPEYVRQLFQDLEGIDLKSNKVSNKYDKQDNSNGSEINGGFFDNEEGQELHMGQKASYFATTYNSRLFDSKYSQLKKKFMDWDSNSWTDIPDDLKIYLQQDESL.

This is an uncharacterized protein from Saccharomyces cerevisiae (strain ATCC 204508 / S288c) (Baker's yeast).